The sequence spans 578 residues: Zinc finger protein with KRAB and SCAN domains 8 (578 aa).

Positions 1–20 are disordered; that stretch reads MAEESRKPSAPSPPDQTPEE. At serine 12 the chain carries Phosphoserine. Lysine 26 is covalently cross-linked (Glycyl lysine isopeptide (Lys-Gly) (interchain with G-Cter in SUMO2)). The SCAN box domain maps to 51–133; it reads RLRFRQLCYQ…TLLEDLERQI (83 aa). The segment at 158–205 is disordered; the sequence is ASAPEPPNTQLQSEATQHKSPVPQESQERSMSTSQSPTRSQKGSSGDQ. A compositionally biased stretch (polar residues) spans 165–205; it reads NTQLQSEATQHKSPVPQESQERSMSTSQSPTRSQKGSSGDQ. Glycyl lysine isopeptide (Lys-Gly) (interchain with G-Cter in SUMO2) cross-links involve residues lysine 176 and lysine 199. Serine 201 carries the phosphoserine modification. The region spanning 220-316 is the KRAB domain; the sequence is EKIEDMAVSL…GRLERQRGNP (97 aa). Glycyl lysine isopeptide (Lys-Gly) (interchain with G-Cter in SUMO2) cross-links involve residues lysine 221, lysine 272, and lysine 288. 2 C2H2-type zinc fingers span residues 322–344 and 350–372; these read HKCDECGKSFAQSSGLVRHWRIH and YQCNVCGKAFSYRSALLSHQDIH. Residues lysine 374 and lysine 376 each participate in a glycyl lysine isopeptide (Lys-Gly) (interchain with G-Cter in SUMO2) cross-link. 7 consecutive C2H2-type zinc fingers follow at residues 378–400, 406–428, 434–456, 462–484, 490–512, 518–540, and 546–568; these read YHCKECGKAFSQNTGLILHQRIH, YQCNQCGKAFSQSAGLILHQRIH, YECNECGKAFSHSSHLIGHQRIH, YECDECGKTFRRSSHLIGHQRSH, YKCNECGRAFSQKSGLIEHQRIH, YKCKECGKAFNGNTGLIQHLRIH, and YQCNECGKAFIQRSSLIRHQRIH. Glycyl lysine isopeptide (Lys-Gly) (interchain with G-Cter in SUMO2) cross-links involve residues lysine 413 and lysine 441. Lysine 502 is covalently cross-linked (Glycyl lysine isopeptide (Lys-Gly) (interchain with G-Cter in SUMO2)). Residue lysine 572 forms a Glycyl lysine isopeptide (Lys-Gly) (interchain with G-Cter in SUMO2) linkage.

Belongs to the krueppel C2H2-type zinc-finger protein family.

Its subcellular location is the nucleus. Functionally, may be involved in transcriptional regulation. The sequence is that of Zinc finger protein with KRAB and SCAN domains 8 (ZKSCAN8) from Pan paniscus (Pygmy chimpanzee).